The chain runs to 63 residues: Small ribosomal subunit protein bS21 (63 aa).

It belongs to the bacterial ribosomal protein bS21 family.

The chain is Small ribosomal subunit protein bS21 from Azobacteroides pseudotrichonymphae genomovar. CFP2.